A 158-amino-acid polypeptide reads, in one-letter code: MQITIKKLQDLLSSVQRKKIQTLKLKQGKFELLLNKTYKKVNQEIIPSQKSAVLQNSPSTIIKSINNTKKIFCVNEDRTEYATIVSPMVGTFYHSPAPGEKIFVQVGDEVKFNQTVCIIEAMKLMNEIEAEIEGKIIEILVKDGDIVDCGQALMKVET.

Positions Tyr-81–Glu-157 constitute a Biotinyl-binding domain. The residue at position 123 (Lys-123) is an N6-biotinyllysine.

The protein localises to the plastid. Its subcellular location is the chloroplast. It functions in the pathway lipid metabolism; fatty acid biosynthesis. Functionally, this protein is a component of the acetyl coenzyme A carboxylase complex; first, biotin carboxylase catalyzes the carboxylation of the carrier protein and then the transcarboxylase transfers the carboxyl group to form malonyl-CoA. This Pyropia yezoensis (Susabi-nori) protein is Biotin carboxyl carrier protein of acetyl-CoA carboxylase (accB).